Here is a 213-residue protein sequence, read N- to C-terminus: Uridine kinase (213 aa).

12–19 is an ATP binding site; sequence GGSCSGKT.

The protein belongs to the uridine kinase family.

Its subcellular location is the cytoplasm. The catalysed reaction is uridine + ATP = UMP + ADP + H(+). It catalyses the reaction cytidine + ATP = CMP + ADP + H(+). It functions in the pathway pyrimidine metabolism; CTP biosynthesis via salvage pathway; CTP from cytidine: step 1/3. The protein operates within pyrimidine metabolism; UMP biosynthesis via salvage pathway; UMP from uridine: step 1/1. The polypeptide is Uridine kinase (udk) (Mycoplasma genitalium (strain ATCC 33530 / DSM 19775 / NCTC 10195 / G37) (Mycoplasmoides genitalium)).